Here is a 430-residue protein sequence, read N- to C-terminus: S-adenosylmethionine synthase (430 aa).

His14 is a binding site for ATP. Residue Asp16 participates in Mg(2+) binding. K(+) is bound at residue Glu42. L-methionine-binding residues include Glu55 and Gln98. The interval 98-108 is flexible loop; sequence QSADINRGVER. ATP contacts are provided by residues 164–166, 254–255, Asp263, 269–270, Ala286, and Lys290; these read DAK, KF, and RK. Asp263 is a binding site for L-methionine. Lys294 lines the L-methionine pocket.

The protein belongs to the AdoMet synthase family. Homotetramer; dimer of dimers. Requires Mg(2+) as cofactor. K(+) serves as cofactor.

Its subcellular location is the cytoplasm. It carries out the reaction L-methionine + ATP + H2O = S-adenosyl-L-methionine + phosphate + diphosphate. It participates in amino-acid biosynthesis; S-adenosyl-L-methionine biosynthesis; S-adenosyl-L-methionine from L-methionine: step 1/1. In terms of biological role, catalyzes the formation of S-adenosylmethionine (AdoMet) from methionine and ATP. The overall synthetic reaction is composed of two sequential steps, AdoMet formation and the subsequent tripolyphosphate hydrolysis which occurs prior to release of AdoMet from the enzyme. This chain is S-adenosylmethionine synthase, found in Phocaeicola vulgatus (strain ATCC 8482 / DSM 1447 / JCM 5826 / CCUG 4940 / NBRC 14291 / NCTC 11154) (Bacteroides vulgatus).